The sequence spans 1943 residues: Beta-L-arabinobiosidase (1943 aa).

A signal peptide (tat-type signal) is located at residues M1–A32. F5/8 type C domains are found at residues T892–T1049 and S1142–I1302. The 97-residue stretch at T1061–N1157 folds into the PKD domain. FIVAR domains follow at residues A1678–A1716, D1746–Q1790, and Q1823–A1864. Residues T1875–T1906 are disordered. Residues D1890–R1902 show a composition bias toward basic and acidic residues. A helical transmembrane segment spans residues A1908–L1928.

Belongs to the glycosyl hydrolase 121 family. Post-translationally, predicted to be exported by the Tat system. The position of the signal peptide cleavage has not been experimentally proven.

The protein localises to the membrane. It carries out the reaction 4-O-(beta-L-arabinofuranosyl-(1-&gt;2)-beta-L-arabinofuranosyl-(1-&gt;2)-beta-L-arabinofuranosyl)-(2S,4S)-4-hydroxyproline + H2O = 4-O-(beta-L-arabinofuranosyl)-(2S,4S)-4-hydroxyproline + beta-L-arabinofuranosyl-(1-&gt;2)-beta-L-arabinofuranose. In terms of biological role, beta-L-arabinobiosidase that removes L-arabinofuranose-beta-1,2-L-arabinofuranose disaccharide from various substrates such as carrot extensin and potato lectin. Also acts on L-arabinofuranose (Ara)-beta-1,2-Ara-beta-1,2-Ara-beta-Hyp (Ara(3)-Hyp) but not on Ara-beta-1,3-Ara-beta-1,2-Ara-beta-1,2-Ara-beta--Hyp (Ara(4)-Hyp) or Ara-beta-1,2-Ara-beta-Hyp (Ara(2)-Hyp), suggesting a specificity for unmodified Ara(3)-Hyp substrate. In the presence of 1-alkanols, shows transglycosylation activity, retaining the anomeric configuration of the arabinofuranose residue. The protein is Beta-L-arabinobiosidase (hypBA2) of Bifidobacterium longum subsp. longum (strain ATCC 15707 / DSM 20219 / JCM 1217 / NCTC 11818 / E194b).